The sequence spans 705 residues: Elongation factor G (705 aa).

In terms of domain architecture, tr-type G spans 6–282 (NKVRNIGIMA…AVVDFLPSPL (277 aa)). GTP-binding positions include 15 to 22 (AHIDAGKT), 79 to 83 (DTPGH), and 133 to 136 (NKMD).

Belongs to the TRAFAC class translation factor GTPase superfamily. Classic translation factor GTPase family. EF-G/EF-2 subfamily.

Its subcellular location is the cytoplasm. In terms of biological role, catalyzes the GTP-dependent ribosomal translocation step during translation elongation. During this step, the ribosome changes from the pre-translocational (PRE) to the post-translocational (POST) state as the newly formed A-site-bound peptidyl-tRNA and P-site-bound deacylated tRNA move to the P and E sites, respectively. Catalyzes the coordinated movement of the two tRNA molecules, the mRNA and conformational changes in the ribosome. The sequence is that of Elongation factor G from Corynebacterium glutamicum (strain ATCC 13032 / DSM 20300 / JCM 1318 / BCRC 11384 / CCUG 27702 / LMG 3730 / NBRC 12168 / NCIMB 10025 / NRRL B-2784 / 534).